A 396-amino-acid chain; its full sequence is Growth-regulating factor 1 (396 aa).

One can recognise a QLQ domain in the interval 18 to 53 (PFTASQWQELEHQALIYKYMASGTPIPSDLILPLRR). 2 short sequence motifs (bipartite nuclear localization signal) span residues 86-105 (RKAEDPEPGRCRRTDGKKWR) and 123-130 (RGKNRSRK). Residues 90–134 (DPEPGRCRRTDGKKWRCSKEAYPDSKYCEKHMHRGKNRSRKPVEM) enclose the WRC domain. A disordered region spans residues 117 to 176 (CEKHMHRGKNRSRKPVEMSLATPPPPSSSATSAASNSSAGVAPTTTTTSSPAPSYSRPAP). The span at 120 to 129 (HMHRGKNRSR) shows a compositional bias: basic residues. The span at 144-174 (SSATSAASNSSAGVAPTTTTTSSPAPSYSRP) shows a compositional bias: low complexity.

The protein belongs to the GRF family. As to expression, highly expressed in the intercalary meristem of the internode and in the shoot apex. Detected in the leaf primordia and emerging leaves in the uppermost node. Preferentially localized in the epidermis and in the tissues surrounding vascular bundles of the intercalary meristem of the internode and in adventitious roots of the second highest node. Low expression in the coleoptile and in the youngest leaf.

Its subcellular location is the nucleus. Its function is as follows. Transcription activator that plays a regulatory role in gibberellin-induced stem elongation. In Oryza sativa subsp. indica (Rice), this protein is Growth-regulating factor 1 (GRF1).